The chain runs to 486 residues: Patatin-like phospholipase domain-containing protein 2 (486 aa).

The Cytoplasmic portion of the chain corresponds to methionine 1 to tryptophan 8. A helical membrane pass occupies residues asparagine 9 to leucine 29. Residues isoleucine 10 to lysine 179 enclose the PNPLA domain. The GXGXXG signature appears at glycine 14 to glycine 19. The Extracellular portion of the chain corresponds to arginine 30 to histidine 42. Asparagine 39 carries an N-linked (GlcNAc...) asparagine glycan. Residues isoleucine 43 to glycine 63 form a helical membrane-spanning segment. The GXSXG signature appears at glycine 45 to glycine 49. Serine 47 functions as the Nucleophile in the catalytic mechanism. Over glutamate 64–glutamate 137 the chain is Cytoplasmic. Lysine 92 participates in a covalent cross-link: Glycyl lysine isopeptide (Lys-Gly) (interchain with G-Cter in ubiquitin). A helical transmembrane segment spans residues leucine 138–threonine 158. At leucine 159–arginine 331 the chain is on the extracellular side. Aspartate 166 functions as the Proton acceptor in the catalytic mechanism. The DGA/G motif lies at aspartate 166–glycine 168. The helical transmembrane segment at leucine 332–isoleucine 352 threads the bilayer. Residues arginine 353–cysteine 486 are Cytoplasmic-facing. Serine 374 is modified (phosphoserine; in vitro). Residues serine 396 and serine 406 each carry the phosphoserine; by PKA modification. Phosphoserine; in vitro occurs at positions 430 and 468. The span at alanine 465–threonine 476 shows a compositional bias: low complexity. The disordered stretch occupies residues alanine 465–cysteine 486. The segment covering proline 477–cysteine 486 has biased composition (pro residues).

Interacts with ABHD5; this association stimulates PNPLA2 triglyceride hydrolase activity. Interacts with SERPINF1; this interaction stimulates the phospholipase A2 activity of PNPLA2. Despite a colocalization in lipid droplets, it probably does not interact with PLIN. Interacts with PLIN5; prevents interaction with ABHD5. Interacts with FAF2. In terms of processing, phosphorylation at Ser-406 by PKA is increased during fasting and moderate intensity exercise, and moderately increases lipolytic activity. Post-translationally, ubiquitinated by PEX2 in response to reactive oxygen species (ROS), leading to its degradation. Ubiquitination is stimulated by LDAH. In terms of tissue distribution, expressed at high levels in white and brown adipose tissue, and to a lesser degree in testis and cardiac muscle. Barely detected in liver, spleen, thymus, kidney, skeletal muscle, and brain. Among the white adipose depots, gonadal fat showed the highest level of expression compared with inguinal and renal white adipose tissues.

It localises to the lipid droplet. Its subcellular location is the cell membrane. It is found in the cytoplasm. It carries out the reaction a triacylglycerol + H2O = a diacylglycerol + a fatty acid + H(+). The catalysed reaction is a triacylglycerol + H2O = a 1,2-diacylglycerol + a fatty acid + H(+). It catalyses the reaction a triacylglycerol + H2O = a 1,3-diacylglycerol + a fatty acid + H(+). The enzyme catalyses a triacyl-sn-glycerol + H2O = a 2,3-diacyl-sn-glycerol + a fatty acid + H(+). It carries out the reaction a triacyl-sn-glycerol + H2O = a 1,3-diacyl-sn-glycerol + a fatty acid + H(+). The catalysed reaction is 1,2,3-tri-(9Z-octadecenoyl)-glycerol + H2O = 1,3-di-(9Z-octadecenoyl)-glycerol + (9Z)-octadecenoate + H(+). It catalyses the reaction 1,2,3-tri-(9Z)-hexadecenoylglycerol + H2O = 1,3-di-(9Z)-hexadecenoylglycerol + (9Z)-hexadecenoate + H(+). The enzyme catalyses 1,2,3-tri-(9Z,12Z)-octadecadienoylglycerol + H2O = 1,3-di-(9Z,12Z)-octadecadienoylglycerol + (9Z,12Z)-octadecadienoate + H(+). It carries out the reaction 1,2,3-tri-(9Z,12Z,15Z)-octadecatrienoylglycerol + H2O = 1,3-di-(9Z,12Z,15Z)-octadecatrienoylglycerol + (9Z,12Z,15Z)-octadecatrienoate + H(+). The catalysed reaction is 1,3-di-(9Z)-octadecenoyl-2-hexadecanoylglycerol + H2O = 1,3-di-(9Z-octadecenoyl)-glycerol + hexadecanoate + H(+). It catalyses the reaction 1,2-di-(9Z)-octadecenoyl-3-hexadecanoyl-sn-glycerol + H2O = 1-(9Z)-octadecenoyl-3-hexadecanoyl-sn-glycerol + (9Z)-octadecenoate + H(+). The enzyme catalyses 1-hexadecanoyl-2,3-di-(9Z)-octadecenoyl-sn-glycerol + H2O = 1-hexadecanoyl-3-(9Z)-octadecenoyl-sn-glycerol + (9Z)-octadecenoate + H(+). It carries out the reaction 1,2,3-tri-(9Z-octadecenoyl)-glycerol + H2O = 2,3-di-(9Z)-octadecenoyl-sn-glycerol + (9Z)-octadecenoate + H(+). The catalysed reaction is 1,2,3-tri-(9Z)-hexadecenoylglycerol + H2O = 2,3-di-(9Z)-hexadecenoyl-sn-glycerol + (9Z)-hexadecenoate + H(+). It catalyses the reaction 1,2,3-tri-(9Z,12Z)-octadecadienoylglycerol + H2O = 2,3-di-(9Z,12Z)-octadecadienoyl-sn-glycerol + (9Z,12Z)-octadecadienoate + H(+). The enzyme catalyses 1,2,3-tri-(9Z,12Z,15Z)-octadecatrienoylglycerol + H2O = 2,3-di-(9Z,12Z,15Z)-octadecatrienoyl-sn-glycerol + (9Z,12Z,15Z)-octadecatrienoate + H(+). It carries out the reaction 1,3-di-(9Z)-octadecenoyl-2-hexadecanoylglycerol + H2O = 2-hexadecanoyl-3-(9Z)-octadecenoyl-sn-glycerol + (9Z)-octadecenoate + H(+). The catalysed reaction is 1-hexadecanoyl-2,3-di-(9Z)-octadecenoyl-sn-glycerol + H2O = 2,3-di-(9Z)-octadecenoyl-sn-glycerol + hexadecanoate + H(+). It catalyses the reaction 1,2-di-(9Z)-octadecenoyl-3-hexadecanoyl-sn-glycerol + H2O = 2-(9Z-octadecenoyl)-3-hexadecanoyl-sn-glycerol + (9Z)-octadecenoate + H(+). The enzyme catalyses 1,2-di-(9Z-octadecenoyl)-glycerol + (9Z)-octadecenoate + H(+) = 1,2,3-tri-(9Z-octadecenoyl)-glycerol + H2O. It carries out the reaction a 1-acylglycerol + a 1,3-diacylglycerol = a triacylglycerol + glycerol. The catalysed reaction is a 1-acylglycerol + a 1,2-diacylglycerol = a triacylglycerol + glycerol. It catalyses the reaction 2 a 1-acylglycerol = a 1,2-diacylglycerol + glycerol. The enzyme catalyses a triacylglycerol + all-trans-retinol = an all-trans-retinyl ester + a diacylglycerol. It carries out the reaction 1-(9Z-octadecenoyl)-glycerol + 1,3-di-(9Z-octadecenoyl)-glycerol = 1,2,3-tri-(9Z-octadecenoyl)-glycerol + glycerol. The catalysed reaction is 1-(9Z-octadecenoyl)-glycerol + 1,2-di-(9Z-octadecenoyl)-glycerol = 1,2,3-tri-(9Z-octadecenoyl)-glycerol + glycerol. It catalyses the reaction 2 1-(9Z-octadecenoyl)-glycerol = 1,2-di-(9Z-octadecenoyl)-glycerol + glycerol. The enzyme catalyses 1,2,3-tri-(9Z-octadecenoyl)-glycerol + all-trans-retinol = all-trans-retinyl 9Z-octadecenoate + di-(9Z)-octadecenoylglycerol. It carries out the reaction a 1,2-diacyl-sn-glycero-3-phosphocholine + H2O = a 1-acyl-sn-glycero-3-phosphocholine + a fatty acid + H(+). The catalysed reaction is 1,2,3-tri-(9Z-octadecenoyl)-glycerol + 9-hydroxy-octadecanoate = 9-(9Z-octadecenoyloxy)-octadecanoate + 2,3-di-(9Z)-octadecenoyl-sn-glycerol. It catalyses the reaction 1-hexadecanoyl-2,3-di-(9Z)-octadecenoyl-sn-glycerol + 9-hydroxy-octadecanoate = 9-hexadecanoyloxy-octadecanoate + 2,3-di-(9Z)-octadecenoyl-sn-glycerol. The enzyme catalyses 1,2,3-tri-(10Z)-heptadecenoylglycerol + 9-hydroxy-octadecanoate = 2,3-di-(10Z-heptadecenoyl)-sn-glycerol + 9-(10Z-heptadecenoyloxy)-octadecanoate. It carries out the reaction 1,2,3-tri-(9Z,12Z)-octadecadienoylglycerol + 9-hydroxy-octadecanoate = 2,3-di-(9Z,12Z)-octadecadienoyl-sn-glycerol + 9-(9Z,12Z-octadecadienoyloxy)-octadecanoate. The catalysed reaction is 1,2,3-tri-(9Z)-hexadecenoylglycerol + 9-hydroxy-octadecanoate = 2,3-di-(9Z)-hexadecenoyl-sn-glycerol + 9-(9Z-hexadecenoyloxy)-octadecanoate. It catalyses the reaction 9-hydroxy-octadecanoate + 1,2-di-(9Z-octadecenoyl)-sn-glycerol = 9-(9Z-octadecenoyloxy)-octadecanoate + 2-(9Z-octadecenoyl)-glycerol. The enzyme catalyses 1-hexadecanoyl-2,3-di-(9Z)-octadecenoyl-sn-glycerol + 9-hydroxy-octadecanoate = 1-hexadecanoyl-3-(9Z)-octadecenoyl-sn-glycerol + 9-(9Z-octadecenoyloxy)-octadecanoate. The protein operates within glycerolipid metabolism; triacylglycerol degradation. With respect to regulation, stimulated by PKA-dependent PLIN phosphorylation. Its function is as follows. Catalyzes the initial step in triglyceride hydrolysis in adipocyte and non-adipocyte lipid droplets. Exhibits a strong preference for the hydrolysis of long-chain fatty acid esters at the sn-2 position of the glycerol backbone and acts coordinately with LIPE/HLS and DGAT2 within the lipolytic cascade. Also possesses acylglycerol transacylase and phospholipase A2 activities. Transfers fatty acid from triglyceride to retinol, hydrolyzes retinylesters, and generates 1,3-diacylglycerol from triglycerides. Regulates adiposome size and may be involved in the degradation of adiposomes. Catalyzes the formation of an ester bond between hydroxy fatty acids and fatty acids derived from triglycerides or diglycerides to generate fatty acid esters of hydroxy fatty acids (FAHFAs) in adipocytes. Acts antagonistically with LDAH in regulation of cellular lipid stores. Inhibits LDAH-stimulated lipid droplet fusion. May play an important role in energy homeostasis. May play a role in the response of the organism to starvation, enhancing hydrolysis of triglycerides and providing free fatty acids to other tissues to be oxidized in situations of energy depletion. This chain is Patatin-like phospholipase domain-containing protein 2, found in Mus musculus (Mouse).